We begin with the raw amino-acid sequence, 373 residues long: Alanine racemase (373 aa).

Lysine 40 serves as the catalytic Proton acceptor; specific for D-alanine. Lysine 40 is subject to N6-(pyridoxal phosphate)lysine. Position 140 (arginine 140) interacts with substrate. Catalysis depends on tyrosine 268, which acts as the Proton acceptor; specific for L-alanine. Methionine 315 contributes to the substrate binding site.

Belongs to the alanine racemase family. The cofactor is pyridoxal 5'-phosphate.

The catalysed reaction is L-alanine = D-alanine. It functions in the pathway amino-acid biosynthesis; D-alanine biosynthesis; D-alanine from L-alanine: step 1/1. Catalyzes the interconversion of L-alanine and D-alanine. May also act on other amino acids. In Levilactobacillus brevis (strain ATCC 367 / BCRC 12310 / CIP 105137 / JCM 1170 / LMG 11437 / NCIMB 947 / NCTC 947) (Lactobacillus brevis), this protein is Alanine racemase (alr).